We begin with the raw amino-acid sequence, 481 residues long: G-protein coupled receptor 37-like 1 (481 aa).

Positions 1 to 25 (MRWLWPLAVSLAVILAVGLSRVSGG) are cleaved as a signal peptide. 2 disordered regions span residues 26-58 (APLH…GVQQ) and 70-108 (PIHP…NLTG). Residues 26–134 (APLHLGRHRA…ESSYSAYAIM (109 aa)) are Extracellular-facing. O-linked (GalNAc...) threonine glycosylation is found at T79 and T85. A glycan (O-linked (GalNAc...) serine) is linked at S86. A glycan (O-linked (GalNAc...) threonine) is linked at T95. A glycan (N-linked (GlcNAc...) asparagine) is linked at N105. T107 carries O-linked (GalNAc...) threonine glycosylation. The helical transmembrane segment at 135-155 (LLALVVFAVGIVGNLSVMCIV) threads the bilayer. Over 156–167 (WHSYYLKSAWNS) the chain is Cytoplasmic. The helical transmembrane segment at 168-188 (ILASLALWDFLVLFFCLPIVI) threads the bilayer. The Extracellular portion of the chain corresponds to 189–205 (FNEITKQRLLGDVSCRA). C203 and C286 form a disulfide bridge. The chain crosses the membrane as a helical span at residues 206-226 (VPFMEVSSLGVTTFSLCALGI). Residues 227–251 (DRFHVATSTLPKVRPIERCQSILAK) are Cytoplasmic-facing. A helical transmembrane segment spans residues 252–272 (LAVIWVGSMTLAVPELLLWQL). The Extracellular segment spans residues 273-310 (AQEPAPTMGTLDSCIMKPSASLPESLYSLVMTYQNARM). The helical transmembrane segment at 311 to 331 (WWYFGCYFCLPILFTVTCQLV) threads the bilayer. At 332–361 (TWRVRGPPGRKSECRASKHEQCESQLNSTV) the chain is on the cytoplasmic side. Residues 362 to 382 (VGLTVVYAFCTLPENVCNIVV) form a helical membrane-spanning segment. Residues 383–398 (AYLSTELTRQTLDLLG) lie on the Extracellular side of the membrane. Residues 399-419 (LINQFSTFFKGAITPVLLLCI) traverse the membrane as a helical segment. The Cytoplasmic portion of the chain corresponds to 420 to 481 (CRPLGQAFLD…PPLLPLGTPC (62 aa)). S471 is modified (phosphoserine). T479 bears the Phosphothreonine mark.

Belongs to the G-protein coupled receptor 1 family. In terms of assembly, interacts with the PTCH1 receptor. O-glycosylated. Post-translationally, undergoes metalloprotease-mediated cleavage which reduces its constitutive activity. In terms of processing, ubiquitinated. As to expression, expressed in primary cortical astrocytes (at protein level). Expressed in the central nervous system.

The protein localises to the cell membrane. Its subcellular location is the cell projection. The protein resides in the cilium membrane. Functionally, G-protein coupled receptor. Has been shown to bind the neuroprotective and glioprotective factor prosaposin (PSAP), leading to endocytosis followed by an ERK phosphorylation cascade. However, other studies have shown that prosaposin does not increase activity. It has been suggested that GPR37L1 is a constitutively active receptor which signals through the guanine nucleotide-binding protein G(s) subunit alpha. Participates in the regulation of postnatal cerebellar development by modulating the Shh pathway. Regulates baseline blood pressure in females and protects against cardiovascular stress in males. Mediates inhibition of astrocyte glutamate transporters and reduction in neuronal N-methyl-D-aspartate receptor activity. The chain is G-protein coupled receptor 37-like 1 (GPR37L1) from Homo sapiens (Human).